Here is a 569-residue protein sequence, read N- to C-terminus: Potassium-transporting ATPase potassium-binding subunit (569 aa).

Transmembrane regions (helical) follow at residues 3 to 23 (LMEY…SPVL), 68 to 88 (AASL…VLML), 136 to 156 (VGLA…AVAV), 179 to 199 (VLYV…GQGV), 259 to 279 (LQML…GEAV), 284 to 304 (HAWT…LSLY), 384 to 404 (GLYG…LMVG), 422 to 442 (AMLA…VAAV), 490 to 510 (LALA…GVAG), and 534 to 554 (LLLT…ALAL).

The protein belongs to the KdpA family. As to quaternary structure, the system is composed of three essential subunits: KdpA, KdpB and KdpC.

It localises to the cell inner membrane. Functionally, part of the high-affinity ATP-driven potassium transport (or Kdp) system, which catalyzes the hydrolysis of ATP coupled with the electrogenic transport of potassium into the cytoplasm. This subunit binds the periplasmic potassium ions and delivers the ions to the membrane domain of KdpB through an intramembrane tunnel. The chain is Potassium-transporting ATPase potassium-binding subunit from Nitratidesulfovibrio vulgaris (strain DP4) (Desulfovibrio vulgaris).